The chain runs to 70 residues: NADH dehydrogenase [ubiquinone] 1 alpha subcomplex subunit 1 (70 aa).

A helical membrane pass occupies residues 1–21 (MWFEILPGLSVMGVCLLIPGL).

The protein belongs to the complex I NDUFA1 subunit family. Complex I is composed of 45 different subunits. In terms of tissue distribution, primarily expressed in heart and skeletal muscle.

It is found in the mitochondrion inner membrane. In terms of biological role, accessory subunit of the mitochondrial membrane respiratory chain NADH dehydrogenase (Complex I), that is believed not to be involved in catalysis. Complex I functions in the transfer of electrons from NADH to the respiratory chain. The immediate electron acceptor for the enzyme is believed to be ubiquinone. In Homo sapiens (Human), this protein is NADH dehydrogenase [ubiquinone] 1 alpha subcomplex subunit 1 (NDUFA1).